Consider the following 738-residue polypeptide: MQPRWAQGATMWLGVLLTLLLCSSLEGQENSFTINSVDMKSLPDWTVQNGKNLTLQCFADVSTTSHVKPQHQMLFYKDDVLFYNISSMKSTESYFIPEVRIYDSGTYKCTVIVNNKEKTTAEYQVLVEGVPSPRVTLDKKEAIQGGIVRVNCSVPEEKAPIHFTIEKLELNEKMVKLKREKNSRDQNFVILEFPVEEQDRVLSFRCQARIISGIHMQTSESTKSELVTVTESFSTPKFHISPTGMIMEGAQLHIKCTIQVTHLAQEFPEIIIQKDKAIVAHNRHGNKAVYSVMAMVEHSGNYTCKVESSRISKVSSIVVNITELFSKPELESSFTHLDQGERLNLSCSIPGAPPANFTIQKEDTIVSQTQDFTKIASKSDSGTYICTAGIDKVVKKSNTVQIVVCEMLSQPRISYDAQFEVIKGQTIEVRCESISGTLPISYQLLKTSKVLENSTKNSNDPAVFKDNPTEDVEYQCVADNCHSHAKMLSEVLRVKVIAPVDEVQISILSSKVVESGEDIVLQCAVNEGSGPITYKFYREKEGKPFYQMTSNATQAFWTKQKASKEQEGEYYCTAFNRANHASSVPRSKILTVRVILAPWKKGLIAVVIIGVIIALLIIAAKCYFLRKAKAKQMPVEMSRPAVPLLNSNNEKMSDPNMEANSHYGHNDDVRNHAMKPINDNKEPLNSDVQYTEVQVSSAESHKDLGKKDTETVYSEVRKAVPDAVESRYSRTEGSLDGT.

The signal sequence occupies residues methionine 1–glycine 27. Over glutamine 28–lysine 601 the chain is Extracellular. Ig-like C2-type domains are found at residues asparagine 35–alanine 121, glycine 145–phenylalanine 233, and proline 236–serine 315. Asparagine 52, asparagine 84, and asparagine 151 each carry an N-linked (GlcNAc...) asparagine glycan. Cysteine 57 and cysteine 109 are oxidised to a cystine. Intrachain disulfides connect cysteine 152–cysteine 206 and cysteine 256–cysteine 304. Residues asparagine 301, asparagine 320, asparagine 344, asparagine 356, asparagine 453, and asparagine 551 are each glycosylated (N-linked (GlcNAc...) asparagine). 3 consecutive Ig-like C2-type domains span residues proline 328–glutamine 401, glycine 424–arginine 493, and proline 499–threonine 591. 3 cysteine pairs are disulfide-bonded: cysteine 347–cysteine 386, cysteine 431–cysteine 476, and cysteine 523–cysteine 572. A helical transmembrane segment spans residues glycine 602–alanine 620. Over lysine 621–threonine 738 the chain is Cytoplasmic. Residue cysteine 622 is the site of S-palmitoyl cysteine attachment. The segment at glutamate 658–glutamate 715 is disordered. Positions serine 686 to alanine 698 are enriched in polar residues. Short sequence motifs (ITIM motif) lie at residues valine 688–valine 693 and threonine 711–valine 716. Phosphotyrosine; by FER is present on residues tyrosine 690 and tyrosine 713. Residues glutamate 699 to glutamate 715 are compositionally biased toward basic and acidic residues. The tract at residues threonine 709–serine 729 is membrane-bound segment which detaches upon phosphorylation. The interval proline 721–threonine 738 is may play a role in cytoprotective signaling. 2 positions are modified to phosphoserine: serine 729 and serine 734.

In terms of assembly, trans-homodimer (via Ig-like C2-type 1 and Ig-like C2-type 2 domains); trans-homodimerization is required for cell-cell interaction. Forms a complex with BDKRB2 and GNAQ. Interacts with BDKRB2 and GNAQ. Interacts with PTPN11; Tyr-713 is critical for PTPN11 recruitment. Interacts with FER. Interacts (via Ig-like C2-type domain 6) with CD177; the interaction is Ca(2+)-dependent; the interaction is direct. Phosphorylated on Ser and Tyr residues after cellular activation by src kinases. Upon activation, phosphorylated on Ser-729 which probably initiates the dissociation of the membrane-interaction segment (residues 709-729) from the cell membrane allowing the sequential phosphorylation of Tyr-713 and Tyr-690. Constitutively phosphorylated on Ser-734 in resting platelets. Phosphorylated on tyrosine residues by FER and FES in response to FCER1 activation. In endothelial cells Fyn mediates mechanical-force (stretch or pull) induced tyrosine phosphorylation. Post-translationally, palmitoylation by ZDHHC21 is necessary for cell surface expression in endothelial cells and enrichment in membrane rafts. As to expression, expressed on platelets and leukocytes and is primarily concentrated at the borders between endothelial cells. Expressed in human umbilical vein endothelial cells (HUVECs) (at protein level). Expressed on neutrophils (at protein level). Isoform Long predominates in all tissues examined. Isoform Delta12 is detected only in trachea. Isoform Delta14-15 is only detected in lung. Isoform Delta14 is detected in all tissues examined with the strongest expression in heart. Isoform Delta15 is expressed in brain, testis, ovary, cell surface of platelets, human umbilical vein endothelial cells (HUVECs), Jurkat T-cell leukemia, human erythroleukemia (HEL) and U-937 histiocytic lymphoma cell lines (at protein level).

The protein resides in the cell membrane. The protein localises to the membrane raft. Its subcellular location is the cell junction. Its function is as follows. Cell adhesion molecule which is required for leukocyte transendothelial migration (TEM) under most inflammatory conditions. Tyr-690 plays a critical role in TEM and is required for efficient trafficking of PECAM1 to and from the lateral border recycling compartment (LBRC) and is also essential for the LBRC membrane to be targeted around migrating leukocytes. Trans-homophilic interaction may play a role in endothelial cell-cell adhesion via cell junctions. Heterophilic interaction with CD177 plays a role in transendothelial migration of neutrophils. Homophilic ligation of PECAM1 prevents macrophage-mediated phagocytosis of neighboring viable leukocytes by transmitting a detachment signal. Promotes macrophage-mediated phagocytosis of apoptotic leukocytes by tethering them to the phagocytic cells; PECAM1-mediated detachment signal appears to be disabled in apoptotic leukocytes. Modulates bradykinin receptor BDKRB2 activation. Regulates bradykinin- and hyperosmotic shock-induced ERK1/2 activation in endothelial cells. Induces susceptibility to atherosclerosis. In terms of biological role, does not protect against apoptosis. In Homo sapiens (Human), this protein is Platelet endothelial cell adhesion molecule (PECAM1).